We begin with the raw amino-acid sequence, 91 residues long: Probable Fe(2+)-trafficking protein (91 aa).

The protein belongs to the Fe(2+)-trafficking protein family.

Could be a mediator in iron transactions between iron acquisition and iron-requiring processes, such as synthesis and/or repair of Fe-S clusters in biosynthetic enzymes. This chain is Probable Fe(2+)-trafficking protein, found in Glaesserella parasuis serovar 5 (strain SH0165) (Haemophilus parasuis).